A 943-amino-acid polypeptide reads, in one-letter code: MQDKIVIHGARAHNLKNIDVEIPRDKLVVVTGLSGSGKSSLAFDTLYAEGQRRYVESLSAYARQFLGNMEKPDVDAIDGLSPAISIDQKTTSKNPRSTVGTTTEINDYLRLLYARVGTPYCINGHGAINASSVEQIVDKVLELPERQRLQILAPVIRKKKGQHKSVIEKVQKDGYVRVRVDGEVYDVTEVPELSKSKQHNIDVVVDRIVIKEGIRSRLFDSIEAALRIAEGYVIIDTMDDSELLFSEHYACPVCGFTVPELEPRLFSFNAPFGSCSECDGLGIKLEVDTDLVVPDASKTLREGALAPWNPISSNYYPNMLEQAMKVFGVAMDKPFEDLSEEDKNLILYGSDGKEFHFHYENEFGGVRDIDIPFEGVINNIKRRYHETNSDYTRTQMRLYMNELTCGTCQGYRLNDQALSVRVGGQQGPHIGEISDLSIADHLDLVSQLTLSENEAIIARPILKEIKDRLTFLNNVGLNYLTLSRSAGTLSGGESQRIRLATQIGSNLSGVLYILDEPSIGLHQRDNDRLIASLKKMRDLGNTLIVVEHDEDTMREADYLIDVGPGAGVFGGEIVAAGTPKQVARNSKSITGQYLSGKRVIPVPEERRVGNGRFIEVIGARENNLQNVTARFPLGKFIAVTGVSGSGKSTLINSILKKAIAQKLNRNSDKPGKFKTITGIEHVDRLIDIDQSPIGRTPRSNPATYTGVFDDIRDLFAQTNEAKIRGYKKGRFSFNVKGGRCEACSGDGIIKIEMHFLPDVYVACEVCHGTRYNSETLEVHYKEKNISQVLDMTVNDAVEFFQHIPKIQRKLQTIKDVGLGYVTLGQPATTLSGGEAQRMKLASELHKRSTGKSFYILDEPTTGLHTEDIARLLKVLARFVDDGNTVLVIEHNLDVIKTADHIIDLGPEGGVGGGTIIVTGTPEEVAANEASYTGHYLKGKLHHE.

ATP is bound at residue 32–39 (GLSGSGKS). The segment at 251–278 (CPVCGFTVPELEPRLFSFNAPFGSCSEC) adopts a C4-type zinc-finger fold. 2 ABC transporter domains span residues 308 to 589 (WNPI…SKSI) and 609 to 937 (GNGR…HYLK). Residue 641–648 (GVSGSGKS) participates in ATP binding. The C4-type zinc finger occupies 740 to 766 (CEACSGDGIIKIEMHFLPDVYVACEVC).

The protein belongs to the ABC transporter superfamily. UvrA family. In terms of assembly, forms a heterotetramer with UvrB during the search for lesions.

The protein resides in the cytoplasm. The UvrABC repair system catalyzes the recognition and processing of DNA lesions. UvrA is an ATPase and a DNA-binding protein. A damage recognition complex composed of 2 UvrA and 2 UvrB subunits scans DNA for abnormalities. When the presence of a lesion has been verified by UvrB, the UvrA molecules dissociate. This Streptococcus pneumoniae serotype 4 (strain ATCC BAA-334 / TIGR4) protein is UvrABC system protein A.